Here is a 166-residue protein sequence, read N- to C-terminus: Small ribosomal subunit protein uS5 (166 aa).

The region spanning 11–74 is the S5 DRBM domain; sequence LQEKLISVNR…DKARKNMIII (64 aa).

Belongs to the universal ribosomal protein uS5 family. As to quaternary structure, part of the 30S ribosomal subunit. Contacts proteins S4 and S8.

Its function is as follows. With S4 and S12 plays an important role in translational accuracy. Functionally, located at the back of the 30S subunit body where it stabilizes the conformation of the head with respect to the body. The chain is Small ribosomal subunit protein uS5 from Wigglesworthia glossinidia brevipalpis.